A 660-amino-acid chain; its full sequence is DNA topoisomerase I, plasmid (660 aa).

Residues 1–110 (MKLMIIESPG…LRVTFNEITA (110 aa)) enclose the Toprim domain. Residues E7 and D79 each coordinate Mg(2+). Residues 124-550 (DVKRVAAQEA…KVHDQLNMEL (427 aa)) enclose the Topo IA-type catalytic domain. An interaction with DNA region spans residues 158–163 (SAGRVQ). Y287 serves as the catalytic O-(5'-phospho-DNA)-tyrosine intermediate. 2 consecutive C4-type zinc fingers follow at residues 563–589 (CQECGKPLRRIPGKNGHFWGCSGYPDC) and 613–643 (CVKCGNPLKHLVKKGKGGYDFWGCSGFKEGC).

The protein belongs to the type IA topoisomerase family. In terms of assembly, monomer. Mg(2+) is required as a cofactor.

It carries out the reaction ATP-independent breakage of single-stranded DNA, followed by passage and rejoining.. In terms of biological role, releases the supercoiling and torsional tension of DNA, which is introduced during the DNA replication and transcription, by transiently cleaving and rejoining one strand of the DNA duplex. Introduces a single-strand break via transesterification at a target site in duplex DNA. The scissile phosphodiester is attacked by the catalytic tyrosine of the enzyme, resulting in the formation of a DNA-(5'-phosphotyrosyl)-enzyme intermediate and the expulsion of a 3'-OH DNA strand. The free DNA strand then undergoes passage around the unbroken strand, thus removing DNA supercoils. Finally, in the religation step, the DNA 3'-OH attacks the covalent intermediate to expel the active-site tyrosine and restore the DNA phosphodiester backbone. This chain is DNA topoisomerase I, plasmid, found in Xylella fastidiosa (strain 9a5c).